The following is a 211-amino-acid chain: Large ribosomal subunit protein uL4 (211 aa).

The span at 41-53 (QAHSRQGTASTLT) shows a compositional bias: polar residues. Residues 41 to 78 (QAHSRQGTASTLTRAEVRGGGRKPYKQKGTGRARQGTI) are disordered. The segment covering 60 to 71 (GGRKPYKQKGTG) has biased composition (basic residues).

The protein belongs to the universal ribosomal protein uL4 family. In terms of assembly, part of the 50S ribosomal subunit.

Its function is as follows. One of the primary rRNA binding proteins, this protein initially binds near the 5'-end of the 23S rRNA. It is important during the early stages of 50S assembly. It makes multiple contacts with different domains of the 23S rRNA in the assembled 50S subunit and ribosome. Forms part of the polypeptide exit tunnel. In Prochlorococcus marinus (strain MIT 9313), this protein is Large ribosomal subunit protein uL4.